A 298-amino-acid chain; its full sequence is Acetylglutamate kinase (298 aa).

Residues 69–70 (GG), Arg-91, and Asn-191 contribute to the substrate site.

Belongs to the acetylglutamate kinase family. ArgB subfamily.

It localises to the cytoplasm. The enzyme catalyses N-acetyl-L-glutamate + ATP = N-acetyl-L-glutamyl 5-phosphate + ADP. Its pathway is amino-acid biosynthesis; L-arginine biosynthesis; N(2)-acetyl-L-ornithine from L-glutamate: step 2/4. In terms of biological role, catalyzes the ATP-dependent phosphorylation of N-acetyl-L-glutamate. The polypeptide is Acetylglutamate kinase (Neisseria meningitidis serogroup C (strain 053442)).